The primary structure comprises 379 residues: Protein COS4 (379 aa).

Transmembrane regions (helical) follow at residues 43-63 (IYKS…SVWW), 70-90 (IYPL…VLVI), 233-253 (ISNI…YVSR), and 255-275 (MCLL…VQGF).

It belongs to the DUP/COS family.

The protein resides in the membrane. The sequence is that of Protein COS4 (COS4) from Saccharomyces cerevisiae (strain ATCC 204508 / S288c) (Baker's yeast).